Reading from the N-terminus, the 400-residue chain is GTPase Obg (400 aa).

Residues 1–159 (MRFVDEAVIT…REIRLELKVL (159 aa)) enclose the Obg domain. Residues 160-333 (ADVGLLGMPN…VVYYLMDQIE (174 aa)) enclose the OBG-type G domain. Residues 166–173 (GMPNAGKS), 191–195 (FTTMV), 213–216 (DIPG), 283–286 (NKLD), and 314–316 (SGL) contribute to the GTP site. The Mg(2+) site is built by Ser173 and Thr193.

Belongs to the TRAFAC class OBG-HflX-like GTPase superfamily. OBG GTPase family. In terms of assembly, monomer. It depends on Mg(2+) as a cofactor.

The protein resides in the cytoplasm. An essential GTPase which binds GTP, GDP and possibly (p)ppGpp with moderate affinity, with high nucleotide exchange rates and a fairly low GTP hydrolysis rate. Plays a role in control of the cell cycle, stress response, ribosome biogenesis and in those bacteria that undergo differentiation, in morphogenesis control. The polypeptide is GTPase Obg (Acinetobacter baylyi (strain ATCC 33305 / BD413 / ADP1)).